Reading from the N-terminus, the 1416-residue chain is DNA-directed RNA polymerase subunit beta' (1416 aa).

Zn(2+)-binding residues include C71, C73, C86, and C89. Mg(2+) is bound by residues D461, D463, and D465. Zn(2+)-binding residues include C815, C892, C899, and C902.

It belongs to the RNA polymerase beta' chain family. In terms of assembly, the RNAP catalytic core consists of 2 alpha, 1 beta, 1 beta' and 1 omega subunit. When a sigma factor is associated with the core the holoenzyme is formed, which can initiate transcription. Mg(2+) serves as cofactor. The cofactor is Zn(2+).

It carries out the reaction RNA(n) + a ribonucleoside 5'-triphosphate = RNA(n+1) + diphosphate. In terms of biological role, DNA-dependent RNA polymerase catalyzes the transcription of DNA into RNA using the four ribonucleoside triphosphates as substrates. The protein is DNA-directed RNA polymerase subunit beta' of Blochmanniella pennsylvanica (strain BPEN).